We begin with the raw amino-acid sequence, 227 residues long: Mitochondrial cardiolipin hydrolase (227 aa).

Residues 1-14 lie on the Mitochondrial intermembrane side of the membrane; it reads MDVFKQMSFKELMK. The chain crosses the membrane as a helical span at residues 15–33; that stretch reads VLGLGTVAFVLGVEWLNWL. Over 34–227 the chain is Cytoplasmic; the sequence is TRRLRDSRGP…LQSKNGQIKK (194 aa). The PLD phosphodiesterase domain maps to 153-180; sequence SAVHMHHKFALVDGRKLISGSLNWTLTA. Active-site residues include His158, Lys160, and Asp165.

It belongs to the phospholipase D family. MitoPLD/Zucchini subfamily. As to quaternary structure, homodimer.

It is found in the mitochondrion outer membrane. It catalyses the reaction a cardiolipin + H2O = a 1,2-diacyl-sn-glycero-3-phospho-(1'-sn-glycerol) + a 1,2-diacyl-sn-glycero-3-phosphate + H(+). Functionally, presents phospholipase and nuclease activities, depending on the different physiological conditions. Plays a key role in mitochondrial fusion and fission via its phospholipase activity. In its phospholipase role, it uses the mitochondrial lipid cardiolipin as substrate to generate phosphatidate (PA or 1,2-diacyl-sn-glycero-3-phosphate), a second messenger signaling lipid. Production of PA facilitates Mitofusin-mediated fusion, whereas the cleavage of PA by the Lipin family of phosphatases produces diacylgycerol (DAG) which promotes mitochondrial fission. Regulates mitochondrial shape through facilitating mitochondrial fusion. During spermatogenesis, plays a critical role in PIWI-interacting RNA (piRNA) biogenesis. piRNAs provide essential protection against the activity of mobile genetic elements. piRNA-mediated transposon silencing is thus critical for maintaining genome stability, in particular in germline cells when transposons are mobilized as a consequence of wide-spread genomic demethylation. Has been shown to be a backbone-non-specific, single strand-specific nuclease, cleaving either RNA or DNA substrates with similar affinity. Produces 5' phosphate and 3' hydroxyl termini, suggesting it could directly participate in the processing of primary piRNA transcripts. Has been proposed to act as a cardiolipin hydrolase to generate phosphatidic acid at mitochondrial surface. Although it cannot be excluded that it can act as a phospholipase in some circumstances, this activity could not be confirmed. This is Mitochondrial cardiolipin hydrolase (pld6) from Danio rerio (Zebrafish).